Consider the following 367-residue polypeptide: NADH-quinone oxidoreductase subunit D (367 aa).

The protein belongs to the complex I 49 kDa subunit family. In terms of assembly, NDH-1 is composed of 14 different subunits. Subunits NuoB, C, D, E, F, and G constitute the peripheral sector of the complex.

It localises to the cell membrane. The enzyme catalyses a quinone + NADH + 5 H(+)(in) = a quinol + NAD(+) + 4 H(+)(out). NDH-1 shuttles electrons from NADH, via FMN and iron-sulfur (Fe-S) centers, to quinones in the respiratory chain. The immediate electron acceptor for the enzyme in this species is believed to be ubiquinone. Couples the redox reaction to proton translocation (for every two electrons transferred, four hydrogen ions are translocated across the cytoplasmic membrane), and thus conserves the redox energy in a proton gradient. The polypeptide is NADH-quinone oxidoreductase subunit D (Dehalococcoides mccartyi (strain CBDB1)).